The following is a 351-amino-acid chain: DNA polymerase IV (351 aa).

The 182-residue stretch at 4–185 (IIHVDMDCFF…LPLAKIPGVG (182 aa)) folds into the UmuC domain. The Mg(2+) site is built by aspartate 8 and aspartate 103. Glutamate 104 is a catalytic residue.

Belongs to the DNA polymerase type-Y family. In terms of assembly, monomer. Mg(2+) serves as cofactor.

It localises to the cytoplasm. It catalyses the reaction DNA(n) + a 2'-deoxyribonucleoside 5'-triphosphate = DNA(n+1) + diphosphate. Its function is as follows. Poorly processive, error-prone DNA polymerase involved in untargeted mutagenesis. Copies undamaged DNA at stalled replication forks, which arise in vivo from mismatched or misaligned primer ends. These misaligned primers can be extended by PolIV. Exhibits no 3'-5' exonuclease (proofreading) activity. May be involved in translesional synthesis, in conjunction with the beta clamp from PolIII. The polypeptide is DNA polymerase IV (Salmonella choleraesuis (strain SC-B67)).